Consider the following 72-residue polypeptide: Translation initiation factor IF-1 (72 aa).

One can recognise an S1-like domain in the interval 1–72; sequence MSKEDVIEVE…TRGRITWRAK (72 aa).

It belongs to the IF-1 family. As to quaternary structure, component of the 30S ribosomal translation pre-initiation complex which assembles on the 30S ribosome in the order IF-2 and IF-3, IF-1 and N-formylmethionyl-tRNA(fMet); mRNA recruitment can occur at any time during PIC assembly.

The protein localises to the cytoplasm. One of the essential components for the initiation of protein synthesis. Stabilizes the binding of IF-2 and IF-3 on the 30S subunit to which N-formylmethionyl-tRNA(fMet) subsequently binds. Helps modulate mRNA selection, yielding the 30S pre-initiation complex (PIC). Upon addition of the 50S ribosomal subunit IF-1, IF-2 and IF-3 are released leaving the mature 70S translation initiation complex. The sequence is that of Translation initiation factor IF-1 from Acetivibrio thermocellus (strain ATCC 27405 / DSM 1237 / JCM 9322 / NBRC 103400 / NCIMB 10682 / NRRL B-4536 / VPI 7372) (Clostridium thermocellum).